Here is a 400-residue protein sequence, read N- to C-terminus: Mu-type opioid receptor (400 aa).

Topologically, residues 1-68 are extracellular; that stretch reads MDSSAAPTNA…CPPTGSPSMI (68 aa). Residues N9, N12, N33, N40, and N48 are each glycosylated (N-linked (GlcNAc...) asparagine). A helical membrane pass occupies residues 69–93; that stretch reads TAITIMALYSIVCVVGLFGNFLVMY. The Cytoplasmic portion of the chain corresponds to 94–106; sequence VIVRYTKMKTATN. Residues 107-131 form a helical membrane-spanning segment; it reads IYIFNLALADALATSTLPFQSVNYL. The Extracellular portion of the chain corresponds to 132–142; sequence MGTWPFGTILC. A disulfide bond links C142 and C219. Residues 143–165 traverse the membrane as a helical segment; it reads KIVISIDYYNMFTSIFTLCTMSV. The Cytoplasmic portion of the chain corresponds to 166–185; sequence DRYIAVCHPVKALDFRTPRN. The residue at position 168 (Y168) is a Phosphotyrosine. A helical transmembrane segment spans residues 186 to 207; that stretch reads AKIINVCNWILSSAIGLPVMFM. Residues 208–230 are Extracellular-facing; the sequence is ATTKYRQGSIDCTLTFSHPTWYW. The helical transmembrane segment at 231–255 threads the bilayer; that stretch reads ENLLKICVFIFAFIMPVLIITVCYG. Residues 256-279 lie on the Cytoplasmic side of the membrane; that stretch reads LMILRLKSVRMLSGSKEKDRNLRR. Residues 280 to 306 form a helical membrane-spanning segment; that stretch reads ITRMVLVVVAVFIVCWTPIHIYVIIKA. Residues 307–314 lie on the Extracellular side of the membrane; sequence LVTIPETT. A helical membrane pass occupies residues 315–338; sequence FQTVSWHFCIALGYTNSCLNPVLY. The NPxxY; plays a role in stabilizing the activated conformation of the receptor motif lies at 334–338; that stretch reads NPVLY. Topologically, residues 339-400 are cytoplasmic; sequence AFLDENFKRC…NLEAETAPLP (62 aa). C353 is lipidated: S-palmitoyl cysteine. S365 carries the phosphoserine modification. T372 carries the post-translational modification Phosphothreonine. A Phosphoserine modification is found at S377. Residue T396 is modified to Phosphothreonine.

This sequence belongs to the G-protein coupled receptor 1 family. In terms of assembly, forms homooligomers and heterooligomers with other GPCRs, such as OPRD1, OPRK1, OPRL1, NPFFR2, ADRA2A, SSTR2, CNR1 and CCR5 (probably in dimeric forms). Interacts with heterotrimeric G proteins; interaction with a heterotrimeric complex containing GNAI1, GNB1 and GNG2 stabilizes the active conformation of the receptor and increases its affinity for endomorphin-2, the synthetic opioid peptide DAMGO and for morphinan agonists. Interacts with PPL; the interaction disrupts agonist-mediated G-protein activation. Interacts (via C-terminus) with DNAJB4 (via C-terminus). Interacts with calmodulin; the interaction inhibits the constitutive activity of OPRM1; it abolishes basal and attenuates agonist-stimulated G-protein coupling. Interacts with FLNA, PLD2, RANBP9 and WLS and GPM6A. Interacts with RTP4. Interacts with SYP and GNAS. Interacts with RGS9, RGS17, RGS20, RGS4, PPP1R9B and HINT1. In terms of processing, phosphorylated. Differentially phosphorylated in basal and agonist-induced conditions. Agonist-mediated phosphorylation modulates receptor internalization. Phosphorylated by GRK2 in a agonist-dependent manner. Phosphorylation at Tyr-168 requires receptor activation, is dependent on non-receptor protein tyrosine kinase Src and results in a decrease in agonist efficacy by reducing G-protein coupling efficiency. Phosphorylated on tyrosine residues; the phosphorylation is involved in agonist-induced G-protein-independent receptor down-regulation. Phosphorylation at Ser-377 is involved in G-protein-dependent but not beta-arrestin-dependent activation of the ERK pathway. Ubiquitinated. A basal ubiquitination seems not to be related to degradation. Ubiquitination is increased upon formation of OPRM1:OPRD1 oligomers leading to proteasomal degradation; the ubiquitination is diminished by RTP4. Expressed in brain. Isoform 16 and isoform 17 are detected in brain.

It localises to the cell membrane. It is found in the cell projection. Its subcellular location is the axon. The protein localises to the perikaryon. The protein resides in the dendrite. It localises to the endosome. It is found in the cytoplasm. In terms of biological role, receptor for endogenous opioids such as beta-endorphin and endomorphin. Receptor for natural and synthetic opioids including morphine, heroin, DAMGO, fentanyl, etorphine, buprenorphin and methadone. Also activated by enkephalin peptides, such as Met-enkephalin or Met-enkephalin-Arg-Phe, with higher affinity for Met-enkephalin-Arg-Phe. Agonist binding to the receptor induces coupling to an inactive GDP-bound heterotrimeric G-protein complex and subsequent exchange of GDP for GTP in the G-protein alpha subunit leading to dissociation of the G-protein complex with the free GTP-bound G-protein alpha and the G-protein beta-gamma dimer activating downstream cellular effectors. The agonist- and cell type-specific activity is predominantly coupled to pertussis toxin-sensitive G(i) and G(o) G alpha proteins, GNAI1, GNAI2, GNAI3 and GNAO1 isoforms Alpha-1 and Alpha-2, and to a lesser extent to pertussis toxin-insensitive G alpha proteins GNAZ and GNA15. They mediate an array of downstream cellular responses, including inhibition of adenylate cyclase activity and both N-type and L-type calcium channels, activation of inward rectifying potassium channels, mitogen-activated protein kinase (MAPK), phospholipase C (PLC), phosphoinositide/protein kinase (PKC), phosphoinositide 3-kinase (PI3K) and regulation of NF-kappa-B. Also couples to adenylate cyclase stimulatory G alpha proteins. The selective temporal coupling to G-proteins and subsequent signaling can be regulated by RGSZ proteins, such as RGS9, RGS17 and RGS4. Phosphorylation by members of the GPRK subfamily of Ser/Thr protein kinases and association with beta-arrestins is involved in short-term receptor desensitization. Beta-arrestins associate with the GPRK-phosphorylated receptor and uncouple it from the G-protein thus terminating signal transduction. The phosphorylated receptor is internalized through endocytosis via clathrin-coated pits which involves beta-arrestins. The activation of the ERK pathway occurs either in a G-protein-dependent or a beta-arrestin-dependent manner and is regulated by agonist-specific receptor phosphorylation. Acts as a class A G-protein coupled receptor (GPCR) which dissociates from beta-arrestin at or near the plasma membrane and undergoes rapid recycling. Receptor down-regulation pathways are varying with the agonist and occur dependent or independent of G-protein coupling. Endogenous ligands induce rapid desensitization, endocytosis and recycling. Heterooligomerization with other GPCRs can modulate agonist binding, signaling and trafficking properties. Couples to GNAS and is proposed to be involved in excitatory effects. Its function is as follows. Does not bind agonists but may act through oligomerization with binding-competent OPRM1 isoforms and reduce their ligand binding activity. This chain is Mu-type opioid receptor (OPRM1), found in Homo sapiens (Human).